Consider the following 390-residue polypeptide: MPGNSFGELFRITTFGESHGPMVGVVIDGVPAGLPIKKEDIEFELSFRRPGRQFVTGRREKDEPEIVSGVYNGRTTGAPITILVKNTDVISSLYEEIHYKPRPGHADLPYIMKYGFENWDYRGGGRASARETVGRVAASAIAKKLLMLTDTWIAGHLKSLGYVELNEPVTFEEVLCSKYSPVRASKKWLEKKYEELVKQATVEGDSWGGIAEIIVRNPPIGLGEPVFDKLKADLAKALLSIPAVMGFEYGLGFNAAKMKGSEANDEIVKKGDKYRWKFNNSGGILGGLSTGEDILVRCAFKPTSSIRKPQKTIDLRTGEETTISVIGRHDPAVAIRGVSVAEAMVSLVIVDHAMRAGYIPTVRISDDQIKIIEERWNKYISLCKPTQVSQ.

Arg-48 lines the NADP(+) pocket. FMN-binding positions include 126-128, Gly-286, 301-305, and Arg-328; these read RAS and KPTSS.

It belongs to the chorismate synthase family. FMNH2 is required as a cofactor.

It carries out the reaction 5-O-(1-carboxyvinyl)-3-phosphoshikimate = chorismate + phosphate. It participates in metabolic intermediate biosynthesis; chorismate biosynthesis; chorismate from D-erythrose 4-phosphate and phosphoenolpyruvate: step 7/7. Catalyzes the anti-1,4-elimination of the C-3 phosphate and the C-6 proR hydrogen from 5-enolpyruvylshikimate-3-phosphate (EPSP) to yield chorismate, which is the branch point compound that serves as the starting substrate for the three terminal pathways of aromatic amino acid biosynthesis. This reaction introduces a second double bond into the aromatic ring system. The sequence is that of Chorismate synthase from Sulfurisphaera tokodaii (strain DSM 16993 / JCM 10545 / NBRC 100140 / 7) (Sulfolobus tokodaii).